The sequence spans 385 residues: Lipid-A-disaccharide synthase 2 (385 aa).

Belongs to the LpxB family.

The enzyme catalyses a lipid X + a UDP-2-N,3-O-bis[(3R)-3-hydroxyacyl]-alpha-D-glucosamine = a lipid A disaccharide + UDP + H(+). Its pathway is bacterial outer membrane biogenesis; LPS lipid A biosynthesis. Functionally, condensation of UDP-2,3-diacylglucosamine and 2,3-diacylglucosamine-1-phosphate to form lipid A disaccharide, a precursor of lipid A, a phosphorylated glycolipid that anchors the lipopolysaccharide to the outer membrane of the cell. The chain is Lipid-A-disaccharide synthase 2 from Legionella pneumophila subsp. pneumophila (strain Philadelphia 1 / ATCC 33152 / DSM 7513).